The following is a 36-amino-acid chain: U14-ctenitoxin-Co1b (36 aa).

Expressed by the venom gland.

It localises to the secreted. Not toxic to mice by intracerebroventricular injection. The protein is U14-ctenitoxin-Co1b of Ctenus ornatus (Brazilian spider).